A 319-amino-acid polypeptide reads, in one-letter code: Bidirectional sugar transporter SWEET15 (319 aa).

At 1–10 (MAFMSMERST) the chain is on the extracellular side. A helical transmembrane segment spans residues 11 to 31 (WAFTFGILGNLISLMVFLSPL). One can recognise a MtN3/slv 1 domain in the interval 13–99 (FTFGILGNLI…AMYLAYAPKS (87 aa)). At 32–50 (PTFYRVYRKKSTEGFQSTP) the chain is on the cytoplasmic side. The chain crosses the membrane as a helical span at residues 51–71 (YVVTLFSCMLWMYYAFVKSGA). A topological domain (extracellular) is located at residue E72. A helical membrane pass occupies residues 73–93 (LLVTINGVGCVIETVYLAMYL). At 94-106 (AYAPKSARMLTAK) the chain is on the cytoplasmic side. A helical transmembrane segment spans residues 107 to 127 (MLLGLNIGLFGVIALVTLLLS). Residues 128 to 134 (RGELRVH) lie on the Extracellular side of the membrane. Residues 135–155 (VLGWICVAVSLSVFAAPLSII) form a helical membrane-spanning segment. The region spanning 135-219 (VLGWICVAVS…ALYMAYRSKK (85 aa)) is the MtN3/slv 2 domain. Residues 156 to 167 (RLVIRTKSVEFM) lie on the Cytoplasmic side of the membrane. The helical transmembrane segment at 168–188 (PFSLSFFLVLSAVIWFLYGLL) threads the bilayer. Over 189 to 191 (KKD) the chain is Extracellular. A helical membrane pass occupies residues 192 to 212 (VFVALPNVLGFVFGVAQMALY). Residues 213–319 (MAYRSKKPLV…KPDMAIVVEV (107 aa)) lie on the Cytoplasmic side of the membrane.

The protein belongs to the SWEET sugar transporter family. Forms homooligomers and/or heterooligomers.

It localises to the cell membrane. Functionally, mediates both low-affinity uptake and efflux of sugar across the plasma membrane. The sequence is that of Bidirectional sugar transporter SWEET15 (SWEET15) from Oryza sativa subsp. indica (Rice).